The following is a 502-amino-acid chain: RNA polymerase sigma factor sigA (502 aa).

Residues 1–23 constitute a chloroplast transit peptide; that stretch reads MATAAVIGLNTGKRLLSSSFYHS. A compositionally biased stretch (polar residues) spans 57–71; sequence YSPSFPSSNRHTQSA. The segment at 57–92 is disordered; that stretch reads YSPSFPSSNRHTQSAKALKESVDVASTEKPWLPNGT. Thr-170 bears the Phosphothreonine mark. The Polymerase core binding motif lies at 287–300; the sequence is DLVQGGLIGLLRGI. Residues 461 to 480 constitute a DNA-binding region (H-T-H motif); sequence WEDISKRIGLSRERVRQVGL.

Belongs to the sigma-70 factor family. As to quaternary structure, interacts with SIB1 in chloroplast. Binds to CSK. Post-translationally, the phosphorylation of Thr-170 mediated by oxidative conditions of plastoquinone (PQ) changes the promoter specificity, selectively inhibiting the transcription of the psaA gene, which encodes a PS-I protein. Phosphorylation of the holoenzyme occurs in the dark. This phosphorylation in response to plastoquinone redox state modification is mediated by CSK. In terms of tissue distribution, highly expressed in leaves, and to a lesser extent in roots. Expressed in old seedlings (8 days), cotyledons, hypocotyls, leaves, sepals and siliques.

It is found in the plastid. The protein localises to the chloroplast. Functionally, essential protein. Sigma factors are initiation factors that promote the attachment of plastid-encoded RNA polymerase (PEP) to specific initiation sites and are then released. Controls the transcription of the psaA gene and thus modulates photosystem stoichiometry. Thereby maintains a harmonious electron flow and photosynthetic efficiency. In Arabidopsis thaliana (Mouse-ear cress), this protein is RNA polymerase sigma factor sigA (SIGA).